The chain runs to 533 residues: Beta-1,4-mannosyl-glycoprotein 4-beta-N-acetylglucosaminyltransferase (533 aa).

At 1–7 (MKMRRYK) the chain is on the cytoplasmic side. A helical; Signal-anchor for type II membrane protein transmembrane segment spans residues 8 to 23 (LFLMFCMAGLCLISFL). Residues 24-533 (HFFKTLSYVT…ARGKLDEAEV (510 aa)) are Lumenal-facing. Positions 119-158 (KPGTKMLERPPPGRPEEKPEGANGSSARRPPRYLLSARER) are disordered. N141, N241, N259, and N397 each carry an N-linked (GlcNAc...) asparagine glycan. The tract at residues 507–533 (STAAGGWRHRGPEGRPPARGKLDEAEV) is disordered.

This sequence belongs to the glycosyltransferase 17 family. As to quaternary structure, interacts with MGAT4D.

It localises to the golgi apparatus membrane. The catalysed reaction is N(4)-{beta-D-GlcNAc-(1-&gt;2)-alpha-D-Man-(1-&gt;3)-[beta-D-GlcNAc-(1-&gt;2)-alpha-D-Man-(1-&gt;6)]-beta-D-Man-(1-&gt;4)-beta-D-GlcNAc-(1-&gt;4)-beta-D-GlcNAc}-L-asparaginyl-[protein] + UDP-N-acetyl-alpha-D-glucosamine = N(4)-{beta-D-GlcNAc-(1-&gt;2)-alpha-D-Man-(1-&gt;3)-[beta-D-GlcNAc-(1-&gt;4)]-[beta-D-GlcNAc-(1-&gt;2)-alpha-D-Man-(1-&gt;6)]-beta-D-Man-(1-&gt;4)-beta-D-GlcNAc-(1-&gt;4)-beta-D-GlcNAc}-L-asparaginyl-[protein] + UDP + H(+). It participates in protein modification; protein glycosylation. It is involved in the regulation of the biosynthesis and biological function of glycoprotein oligosaccharides. Catalyzes the addition of N-acetylglucosamine in beta 1-4 linkage to the beta-linked mannose of the trimannosyl core of N-linked sugar chains, called bisecting N-acetylglucosamine (GlcNAc). It is one of the most important enzymes involved in the regulation of the biosynthesis of glycoprotein oligosaccharides. The addition of this bisecting GlcNAc residue alters not only the composition, but also the conformation of the N-glycan. The introduction of the bisecting GlcNAc residue results in the suppression of further processing and elongation of N-glycans, precluding the formation of beta-1,6 GlcNAc branching, catalyzed by MGAT5 since it is unable to use the bisected oligosaccharide as a substrate. Addition of bisecting N-acetylglucosamine to CDH1/E-cadherin modulates CDH1 cell membrane location. Inhibits NeuAc-alpha-2,3-Gal-beta-1,4-GlcNAc- formation which modulates sialylation levels and plays a role in cell migration regulation. In brain, addition of bisecting N-acetylglucosamine to BACE1 blocks its lysosomal targeting in response to oxidative stress and further degradation which increases its location to early endosome and the APP cleavage. This Homo sapiens (Human) protein is Beta-1,4-mannosyl-glycoprotein 4-beta-N-acetylglucosaminyltransferase.